The sequence spans 396 residues: Tryptophan synthase beta chain (396 aa).

Lys-86 bears the N6-(pyridoxal phosphate)lysine mark.

The protein belongs to the TrpB family. As to quaternary structure, tetramer of two alpha and two beta chains. Requires pyridoxal 5'-phosphate as cofactor.

It carries out the reaction (1S,2R)-1-C-(indol-3-yl)glycerol 3-phosphate + L-serine = D-glyceraldehyde 3-phosphate + L-tryptophan + H2O. It participates in amino-acid biosynthesis; L-tryptophan biosynthesis; L-tryptophan from chorismate: step 5/5. Its function is as follows. The beta subunit is responsible for the synthesis of L-tryptophan from indole and L-serine. The chain is Tryptophan synthase beta chain from Aliivibrio fischeri (strain MJ11) (Vibrio fischeri).